A 104-amino-acid chain; its full sequence is Nucleoid-associated protein PEPE_1483 (104 aa).

A disordered region spans residues 1–35; it reads MRGGMGNMQSMMRQMQKMQKKVTEEQEKLNQTEFT. Residues 8–17 are compositionally biased toward low complexity; the sequence is MQSMMRQMQK. Residues 21–30 are compositionally biased toward basic and acidic residues; that stretch reads KVTEEQEKLN.

It belongs to the YbaB/EbfC family. Homodimer.

Its subcellular location is the cytoplasm. It localises to the nucleoid. Functionally, binds to DNA and alters its conformation. May be involved in regulation of gene expression, nucleoid organization and DNA protection. This Pediococcus pentosaceus (strain ATCC 25745 / CCUG 21536 / LMG 10740 / 183-1w) protein is Nucleoid-associated protein PEPE_1483.